We begin with the raw amino-acid sequence, 603 residues long: UvrABC system protein C (603 aa).

The 78-residue stretch at 17–94 (TTSGCYKMLN…IKTHKPDYNV (78 aa)) folds into the GIY-YIG domain.

It belongs to the UvrC family. As to quaternary structure, interacts with UvrB in an incision complex.

The protein localises to the cytoplasm. Its function is as follows. The UvrABC repair system catalyzes the recognition and processing of DNA lesions. UvrC both incises the 5' and 3' sides of the lesion. The N-terminal half is responsible for the 3' incision and the C-terminal half is responsible for the 5' incision. The polypeptide is UvrABC system protein C (Borreliella burgdorferi (strain ATCC 35210 / DSM 4680 / CIP 102532 / B31) (Borrelia burgdorferi)).